A 780-amino-acid polypeptide reads, in one-letter code: Translation initiation factor IF-2 (780 aa).

The tract at residues 44 to 194 is disordered; the sequence is RQLDNAVDGT…TPPKPKELPE (151 aa). Over residues 53 to 65 the composition is skewed to basic and acidic residues; it reads TNKKAEAPKKETT. Residues 66–81 show a composition bias toward polar residues; that stretch reads SNENGNSKGPNKPNMT. Composition is skewed to low complexity over residues 82–93 and 117–168; these read NSNEKSNKPNKP and ANTS…NNKG. One can recognise a tr-type G domain in the interval 281 to 450; sequence ERPPVVTIMG…LLVSEVEELK (170 aa). Positions 290–297 are G1; it reads GHVDHGKT. A GTP-binding site is contributed by 290–297; that stretch reads GHVDHGKT. The tract at residues 315-319 is G2; it reads GITQH. The segment at 336 to 339 is G3; the sequence is DTPG. GTP-binding positions include 336–340 and 390–393; these read DTPGH and NKID. A G4 region spans residues 390-393; the sequence is NKID. Residues 426–428 form a G5 region; that stretch reads SAK.

This sequence belongs to the TRAFAC class translation factor GTPase superfamily. Classic translation factor GTPase family. IF-2 subfamily.

It is found in the cytoplasm. Its function is as follows. One of the essential components for the initiation of protein synthesis. Protects formylmethionyl-tRNA from spontaneous hydrolysis and promotes its binding to the 30S ribosomal subunits. Also involved in the hydrolysis of GTP during the formation of the 70S ribosomal complex. The chain is Translation initiation factor IF-2 from Listeria welshimeri serovar 6b (strain ATCC 35897 / DSM 20650 / CCUG 15529 / CIP 8149 / NCTC 11857 / SLCC 5334 / V8).